The chain runs to 89 residues: MSIAAERKAEVIKTNATKAGDTGSPEVQVAILSERINNLTSHFKTHVKDNHSRRGLLKLVSTRRSLLDYLKKRDEARYKALLEKHNIRR.

Basic and acidic residues predominate over residues 1–11; the sequence is MSIAAERKAEV. The interval 1-24 is disordered; it reads MSIAAERKAEVIKTNATKAGDTGS.

It belongs to the universal ribosomal protein uS15 family. As to quaternary structure, part of the 30S ribosomal subunit. Forms a bridge to the 50S subunit in the 70S ribosome, contacting the 23S rRNA.

In terms of biological role, one of the primary rRNA binding proteins, it binds directly to 16S rRNA where it helps nucleate assembly of the platform of the 30S subunit by binding and bridging several RNA helices of the 16S rRNA. Its function is as follows. Forms an intersubunit bridge (bridge B4) with the 23S rRNA of the 50S subunit in the ribosome. The polypeptide is Small ribosomal subunit protein uS15 (Bradyrhizobium diazoefficiens (strain JCM 10833 / BCRC 13528 / IAM 13628 / NBRC 14792 / USDA 110)).